The chain runs to 535 residues: cAMP-regulated D2 protein (535 aa).

The N-terminal stretch at 1–20 (MNKLLVFILLLLLLINISFA) is a signal peptide. A disulfide bridge connects residues Cys89 and Cys109. The active-site Acyl-ester intermediate is Ser213. Cys265 and Cys272 are joined by a disulfide. Residues Glu338 and His440 each act as charge relay system in the active site. Asn500 carries N-linked (GlcNAc...) asparagine glycosylation.

It belongs to the type-B carboxylesterase/lipase family.

The protein localises to the cytoplasmic vesicle. It is found in the esterosome membrane. This chain is cAMP-regulated D2 protein (D2), found in Dictyostelium discoideum (Social amoeba).